The primary structure comprises 278 residues: MRATQSLPFKSFWSRSLDELSRLTNIVVKSENIRGATGPREIHNFQTPESVADCKLLSDADVGGSSTAHLDWVPPPNAIPTVTAGDGSDRKPYTPIPGSYARFHGTISLELPTDRREISRTGYAGFRTLDRPPTIFGRGLWDIDPYAYLAMRVKTDARSYFVNVRTESVVPLDLHQHRLFVKKPGQWETVLIKWNDFVRTNHGKVIEPQTGMLRQKVLSIGFSTTDRKAGPYELCVERLWATNDFDEAGVVETDVAGAQLKNKHGEKVKVTWGALEQE.

Residues 1–8 (MRATQSLP) constitute a mitochondrion transit peptide.

It belongs to the CIA30 family.

It localises to the mitochondrion. In terms of biological role, chaperone protein involved in the assembly of the mitochondrial NADH:ubiquinone oxidoreductase complex (complex I). This chain is Complex I intermediate-associated protein 30, mitochondrial (cia30), found in Neurospora crassa (strain ATCC 24698 / 74-OR23-1A / CBS 708.71 / DSM 1257 / FGSC 987).